We begin with the raw amino-acid sequence, 257 residues long: Imidazole glycerol phosphate synthase subunit HisF (257 aa).

Residues Asp11 and Asp130 contribute to the active site.

This sequence belongs to the HisA/HisF family. As to quaternary structure, heterodimer of HisH and HisF.

The protein localises to the cytoplasm. It catalyses the reaction 5-[(5-phospho-1-deoxy-D-ribulos-1-ylimino)methylamino]-1-(5-phospho-beta-D-ribosyl)imidazole-4-carboxamide + L-glutamine = D-erythro-1-(imidazol-4-yl)glycerol 3-phosphate + 5-amino-1-(5-phospho-beta-D-ribosyl)imidazole-4-carboxamide + L-glutamate + H(+). Its pathway is amino-acid biosynthesis; L-histidine biosynthesis; L-histidine from 5-phospho-alpha-D-ribose 1-diphosphate: step 5/9. IGPS catalyzes the conversion of PRFAR and glutamine to IGP, AICAR and glutamate. The HisF subunit catalyzes the cyclization activity that produces IGP and AICAR from PRFAR using the ammonia provided by the HisH subunit. The polypeptide is Imidazole glycerol phosphate synthase subunit HisF (Mannheimia succiniciproducens (strain KCTC 0769BP / MBEL55E)).